A 315-amino-acid chain; its full sequence is Ribosomal RNA small subunit methyltransferase H (315 aa).

Residues 37 to 39 (GGH), Asp-57, Phe-83, Asp-105, and Gln-112 contribute to the S-adenosyl-L-methionine site.

It belongs to the methyltransferase superfamily. RsmH family.

The protein localises to the cytoplasm. It catalyses the reaction cytidine(1402) in 16S rRNA + S-adenosyl-L-methionine = N(4)-methylcytidine(1402) in 16S rRNA + S-adenosyl-L-homocysteine + H(+). Its function is as follows. Specifically methylates the N4 position of cytidine in position 1402 (C1402) of 16S rRNA. The chain is Ribosomal RNA small subunit methyltransferase H from Pseudomonas entomophila (strain L48).